We begin with the raw amino-acid sequence, 229 residues long: Ribonuclease 3 (229 aa).

In terms of domain architecture, RNase III spans 5–127 (LARLERKLGY…LIGAIYLDAD (123 aa)). A Mg(2+)-binding site is contributed by glutamate 40. Aspartate 44 is an active-site residue. Mg(2+) is bound by residues aspartate 113 and glutamate 116. Glutamate 116 is a catalytic residue. The region spanning 154-224 (DPKTRLQEFL…AAAALIALGV (71 aa)) is the DRBM domain.

Belongs to the ribonuclease III family. In terms of assembly, homodimer. Mg(2+) serves as cofactor.

Its subcellular location is the cytoplasm. The catalysed reaction is Endonucleolytic cleavage to 5'-phosphomonoester.. Functionally, digests double-stranded RNA. Involved in the processing of primary rRNA transcript to yield the immediate precursors to the large and small rRNAs (23S and 16S). Processes some mRNAs, and tRNAs when they are encoded in the rRNA operon. Processes pre-crRNA and tracrRNA of type II CRISPR loci if present in the organism. The polypeptide is Ribonuclease 3 (Pseudomonas putida (strain W619)).